The following is a 570-amino-acid chain: Sulfite reductase [NADPH] hemoprotein beta-component (570 aa).

4 residues coordinate [4Fe-4S] cluster: C434, C440, C479, and C483. C483 serves as a coordination point for siroheme.

It belongs to the nitrite and sulfite reductase 4Fe-4S domain family. Alpha(8)-beta(8). The alpha component is a flavoprotein, the beta component is a hemoprotein. Siroheme is required as a cofactor. The cofactor is [4Fe-4S] cluster.

It catalyses the reaction hydrogen sulfide + 3 NADP(+) + 3 H2O = sulfite + 3 NADPH + 4 H(+). Its pathway is sulfur metabolism; hydrogen sulfide biosynthesis; hydrogen sulfide from sulfite (NADPH route): step 1/1. Functionally, component of the sulfite reductase complex that catalyzes the 6-electron reduction of sulfite to sulfide. This is one of several activities required for the biosynthesis of L-cysteine from sulfate. This Klebsiella pneumoniae subsp. pneumoniae (strain ATCC 700721 / MGH 78578) protein is Sulfite reductase [NADPH] hemoprotein beta-component.